A 107-amino-acid chain; its full sequence is MAQKHEHDTSVITESAPKQKLKKPPLYKVLLHNDNYTTREFVVAVLKEVFHKSETDAVQIMLHVHYNGVGVAGVYTYDVAETKIQTVEAAAQENDMPLRLSMEPEEG.

The interval 1 to 20 (MAQKHEHDTSVITESAPKQK) is disordered.

It belongs to the ClpS family. In terms of assembly, binds to the N-terminal domain of the chaperone ClpA.

In terms of biological role, involved in the modulation of the specificity of the ClpAP-mediated ATP-dependent protein degradation. The polypeptide is ATP-dependent Clp protease adapter protein ClpS (Myxococcus xanthus (strain DK1622)).